The primary structure comprises 210 residues: MATNYHDITIAFAGVCQAVSLVQQFAHKGSADREIFANSIKSLLVTQPDSTLAVFDGQLANLKLGLETVQAQMGSPNGKLDTEIGRYWINVLALSQKLNKNPEAKAKLAERLQQIERQLPLYENDIMADQMIANLAAIYSDVISPLGSKIHVLGLQDYLVRPDIQQKIRASLLAGIRAGILWQQVGGTRWQFLFSRRKILNQTQQFYKSI.

Residues 103–130 adopt a coiled-coil conformation; it reads EAKAKLAERLQQIERQLPLYENDIMADQ.

The protein belongs to the HflD family.

It localises to the cytoplasm. It is found in the cell inner membrane. The sequence is that of High frequency lysogenization protein HflD homolog from Actinobacillus pleuropneumoniae serotype 3 (strain JL03).